Here is a 166-residue protein sequence, read N- to C-terminus: Crossover junction endodeoxyribonuclease RuvC (166 aa).

Residues aspartate 11, glutamate 70, and aspartate 142 contribute to the active site. Mg(2+) contacts are provided by aspartate 11, glutamate 70, and aspartate 142.

This sequence belongs to the RuvC family. As to quaternary structure, homodimer which binds Holliday junction (HJ) DNA. The HJ becomes 2-fold symmetrical on binding to RuvC with unstacked arms; it has a different conformation from HJ DNA in complex with RuvA. In the full resolvosome a probable DNA-RuvA(4)-RuvB(12)-RuvC(2) complex forms which resolves the HJ. Mg(2+) is required as a cofactor.

It localises to the cytoplasm. It catalyses the reaction Endonucleolytic cleavage at a junction such as a reciprocal single-stranded crossover between two homologous DNA duplexes (Holliday junction).. The RuvA-RuvB-RuvC complex processes Holliday junction (HJ) DNA during genetic recombination and DNA repair. Endonuclease that resolves HJ intermediates. Cleaves cruciform DNA by making single-stranded nicks across the HJ at symmetrical positions within the homologous arms, yielding a 5'-phosphate and a 3'-hydroxyl group; requires a central core of homology in the junction. The consensus cleavage sequence is 5'-(A/T)TT(C/G)-3'. Cleavage occurs on the 3'-side of the TT dinucleotide at the point of strand exchange. HJ branch migration catalyzed by RuvA-RuvB allows RuvC to scan DNA until it finds its consensus sequence, where it cleaves and resolves the cruciform DNA. The protein is Crossover junction endodeoxyribonuclease RuvC of Nitratidesulfovibrio vulgaris (strain ATCC 29579 / DSM 644 / CCUG 34227 / NCIMB 8303 / VKM B-1760 / Hildenborough) (Desulfovibrio vulgaris).